The sequence spans 70 residues: Conotoxin Cl6.13 (70 aa).

Positions 1 to 21 (MKFPLLFISLALAAFLTRVQD) are cleaved as a signal peptide. The propeptide occupies 22 to 33 (ADSSVISKEKSV). 3 disulfide bridges follow: C41/C58, C48/C63, and C57/C68.

In terms of tissue distribution, expressed by the venom duct.

Its subcellular location is the secreted. In Californiconus californicus (California cone), this protein is Conotoxin Cl6.13.